A 312-amino-acid polypeptide reads, in one-letter code: Light-independent protochlorophyllide reductase iron-sulfur ATP-binding protein (312 aa).

ATP is bound by residues 55 to 60 (GIGKST) and lysine 84. Serine 59 serves as a coordination point for Mg(2+). Residues cysteine 140 and cysteine 174 each coordinate [4Fe-4S] cluster. ATP is bound by residues 225–226 (NR) and 249–251 (PDL).

Belongs to the NifH/BchL/ChlL family. As to quaternary structure, homodimer. Protochlorophyllide reductase is composed of three subunits; BchL, BchN and BchB. It depends on [4Fe-4S] cluster as a cofactor.

It carries out the reaction chlorophyllide a + oxidized 2[4Fe-4S]-[ferredoxin] + 2 ADP + 2 phosphate = protochlorophyllide a + reduced 2[4Fe-4S]-[ferredoxin] + 2 ATP + 2 H2O. Its pathway is porphyrin-containing compound metabolism; bacteriochlorophyll biosynthesis (light-independent). Its function is as follows. Component of the dark-operative protochlorophyllide reductase (DPOR) that uses Mg-ATP and reduced ferredoxin to reduce ring D of protochlorophyllide (Pchlide) to form chlorophyllide a (Chlide). This reaction is light-independent. The L component serves as a unique electron donor to the NB-component of the complex, and binds Mg-ATP. The polypeptide is Light-independent protochlorophyllide reductase iron-sulfur ATP-binding protein (Rhodopseudomonas palustris (strain BisB18)).